Consider the following 481-residue polypeptide: MSAASLKVTTTSRPGSRLAVEVAVPAERSQASYEEAITRLSRSVNLPGFRKGKVPRTVLVQQLGALRIRATALESLVESVWRDALAQETIEALGQPELSGSFEELLDTFKPGEALTVTMETDVAPSPTLKSTKGLKAEAETVAFDAAKVDEMLEQSRRQLATVVPVEGRKAEQGDIAVVGFKGTYSDDGSEIEGGSADSMDVDLEHGRMIPGFVEGVVGMAVGDSKTVDCTFPEDYPKEDARGRKASFAIELKDLKTRELPELDDAFAKQASEQETLAELRSDLEQRLKDDAERRSRSNRHDALLAALVEQLEVELPESLIQQEVRNLVEQTAGQFAQQGMDVQSLFTPELVRNLMESSRPEAEERLRRSLALTALAESEKLSVDDADLNAKLKEVKGQLSGERDIDPERLRQAVLDDLLQEKLLGWLEENSTVTEKAPEAESDAAKASKPAAAKKDASKAKTAKTSKAKTAKAESESAES.

The 88-residue stretch at 174 to 261 folds into the PPIase FKBP-type domain; sequence GDIAVVGFKG…LKDLKTRELP (88 aa). Residues 430 to 481 form a disordered region; it reads ENSTVTEKAPEAESDAAKASKPAAAKKDASKAKTAKTSKAKTAKAESESAES. A compositionally biased stretch (basic and acidic residues) spans 437–447; it reads KAPEAESDAAK. A compositionally biased stretch (basic residues) spans 462-471; sequence KTAKTSKAKT. The segment covering 472–481 has biased composition (basic and acidic residues); sequence AKAESESAES.

Belongs to the FKBP-type PPIase family. Tig subfamily.

The protein localises to the cytoplasm. The catalysed reaction is [protein]-peptidylproline (omega=180) = [protein]-peptidylproline (omega=0). In terms of biological role, involved in protein export. Acts as a chaperone by maintaining the newly synthesized protein in an open conformation. Functions as a peptidyl-prolyl cis-trans isomerase. This is Trigger factor from Synechococcus sp. (strain WH7803).